Here is a 342-residue protein sequence, read N- to C-terminus: Trans-3-hydroxy-L-proline dehydratase (342 aa).

Catalysis depends on Ser-90, which acts as the Proton acceptor. Residues Gly-91–Ser-92, Asp-252, and Gly-257–Thr-258 each bind substrate.

Belongs to the proline racemase family.

The enzyme catalyses trans-3-hydroxy-L-proline = 1-pyrroline-2-carboxylate + H2O. The catalysed reaction is trans-4-hydroxy-L-proline = cis-4-hydroxy-D-proline. Catalyzes the dehydration of trans-3-hydroxy-L-proline (t3LHyp) to Delta(1)-pyrroline-2-carboxylate (Pyr2C). Can also catalyze the epimerization of trans-4-hydroxy-L-proline (t4LHyp) to cis-4-hydroxy-D-proline (c4DHyp), albeit with 30-fold lower efficiency. Is likely involved in both degradation pathways that convert t3LHyp to L-proline and t4LHyp to alpha-ketoglutarate, which would allow A.tumefaciens to grow on t3LHyp or t4LHyp as a sole carbon source. Displays no proline racemase activity. This is Trans-3-hydroxy-L-proline dehydratase from Agrobacterium fabrum (strain C58 / ATCC 33970) (Agrobacterium tumefaciens (strain C58)).